Consider the following 145-residue polypeptide: Transcription antitermination protein NusB (145 aa).

Belongs to the NusB family.

Functionally, involved in transcription antitermination. Required for transcription of ribosomal RNA (rRNA) genes. Binds specifically to the boxA antiterminator sequence of the ribosomal RNA (rrn) operons. The sequence is that of Transcription antitermination protein NusB from Citrifermentans bemidjiense (strain ATCC BAA-1014 / DSM 16622 / JCM 12645 / Bem) (Geobacter bemidjiensis).